A 20-amino-acid chain; its full sequence is Juvenile hormone-binding protein (20 aa).

It localises to the secreted. Its function is as follows. Prevents juvenile hormone from being hydrolyzed by general esterases by combining with it specifically. This chain is Juvenile hormone-binding protein (JHBP), found in Bombyx mori (Silk moth).